Reading from the N-terminus, the 86-residue chain is Small ribosomal subunit protein bS20 (86 aa).

Positions 1–11 (MANIKSAKKRA) are enriched in basic residues. The segment at 1-26 (MANIKSAKKRAITSEKNRQHNASRRS) is disordered.

It belongs to the bacterial ribosomal protein bS20 family.

Functionally, binds directly to 16S ribosomal RNA. The polypeptide is Small ribosomal subunit protein bS20 (Pseudoalteromonas translucida (strain TAC 125)).